The chain runs to 129 residues: Mitochondrial pyruvate carrier 2 (129 aa).

Residues 2–22 (STSSVRFAFRRFWQSETGPKT) lie on the Mitochondrial matrix side of the membrane. Residues 23-39 (VHFWAPTLKWGLVFAGF) form a helical membrane-spanning segment. Topologically, residues 40–54 (SDMKRPVEKISGAQN) are mitochondrial intermembrane. Residues 55-71 (LSLLSTALIWTRWSFVI) form a helical membrane-spanning segment. At 72–74 (KPR) the chain is on the mitochondrial matrix side. Residues 75–91 (NILLASVNSFLCLTAGY) form a helical membrane-spanning segment. Topologically, residues 92-129 (QLGRIANYRIRNGDSISQLCSYILSGADESKKEITTGR) are mitochondrial intermembrane.

Belongs to the mitochondrial pyruvate carrier (MPC) (TC 2.A.105) family. In terms of assembly, the functional 150 kDa pyruvate import complex is a heteromer of MPC1 and either MPC2 or MPC3.

Its subcellular location is the mitochondrion. The protein resides in the mitochondrion inner membrane. The catalysed reaction is pyruvate(out) + H(+)(out) = pyruvate(in) + H(+)(in). Its function is as follows. Mediates the uptake of pyruvate into mitochondria. The chain is Mitochondrial pyruvate carrier 2 from Saccharomyces cerevisiae (strain ATCC 204508 / S288c) (Baker's yeast).